Consider the following 230-residue polypeptide: Somatolactin (230 aa).

The signal sequence occupies residues 1–25 (MHTKVLQQGLWALLLWPHLFTVSVP). 3 cysteine pairs are disulfide-bonded: Cys-28–Cys-38, Cys-88–Cys-204, and Cys-221–Cys-229. Asn-144 is a glycosylation site (N-linked (GlcNAc...) asparagine).

This sequence belongs to the somatotropin/prolactin family.

It localises to the secreted. Its function is as follows. Selectively regulates proliferation and morphogenesis of neural-crest derived pigment cells. This chain is Somatolactin, found in Oryzias latipes (Japanese rice fish).